A 581-amino-acid polypeptide reads, in one-letter code: Proline--tRNA ligase (581 aa).

The protein belongs to the class-II aminoacyl-tRNA synthetase family. ProS type 1 subfamily. As to quaternary structure, homodimer.

It localises to the cytoplasm. It carries out the reaction tRNA(Pro) + L-proline + ATP = L-prolyl-tRNA(Pro) + AMP + diphosphate. Its function is as follows. Catalyzes the attachment of proline to tRNA(Pro) in a two-step reaction: proline is first activated by ATP to form Pro-AMP and then transferred to the acceptor end of tRNA(Pro). As ProRS can inadvertently accommodate and process non-cognate amino acids such as alanine and cysteine, to avoid such errors it has two additional distinct editing activities against alanine. One activity is designated as 'pretransfer' editing and involves the tRNA(Pro)-independent hydrolysis of activated Ala-AMP. The other activity is designated 'posttransfer' editing and involves deacylation of mischarged Ala-tRNA(Pro). The misacylated Cys-tRNA(Pro) is not edited by ProRS. The protein is Proline--tRNA ligase of Delftia acidovorans (strain DSM 14801 / SPH-1).